Here is a 332-residue protein sequence, read N- to C-terminus: ADP-L-glycero-D-manno-heptose-6-epimerase (332 aa).

NADP(+) contacts are provided by residues 10–11, 31–32, K38, K53, 75–79, and N92; these read MI, DK, and MGACS. Y145 acts as the Proton acceptor in catalysis. K149 lines the NADP(+) pocket. N173 serves as a coordination point for substrate. NADP(+)-binding residues include V174 and K182. K182 functions as the Proton acceptor in the catalytic mechanism. Substrate-binding positions include R184, H191, 205–208, R219, and Y290; that span reads FKSY.

Belongs to the NAD(P)-dependent epimerase/dehydratase family. HldD subfamily. Homopentamer. NADP(+) is required as a cofactor.

It carries out the reaction ADP-D-glycero-beta-D-manno-heptose = ADP-L-glycero-beta-D-manno-heptose. It participates in nucleotide-sugar biosynthesis; ADP-L-glycero-beta-D-manno-heptose biosynthesis; ADP-L-glycero-beta-D-manno-heptose from D-glycero-beta-D-manno-heptose 7-phosphate: step 4/4. Functionally, catalyzes the interconversion between ADP-D-glycero-beta-D-manno-heptose and ADP-L-glycero-beta-D-manno-heptose via an epimerization at carbon 6 of the heptose. This Fusobacterium nucleatum subsp. nucleatum (strain ATCC 25586 / DSM 15643 / BCRC 10681 / CIP 101130 / JCM 8532 / KCTC 2640 / LMG 13131 / VPI 4355) protein is ADP-L-glycero-D-manno-heptose-6-epimerase.